Here is a 337-residue protein sequence, read N- to C-terminus: MRVLGIETSCDETGIAIYDDEAGLLANQLYSQIKLHADYGGVVPELASRDHIRKTVPLIQAALKEAGLTCKDIDAVAYTAGPGLVGALLVGATIGRSLAFAWDVPAIPVHHMEGHLLAPMLEDNSPEFPFVALLVSGGHTQLISVTGIGKYELLGESIDDAAGEAFDKTAKLLGLDYPGGPVLSRMAQKGEVGRFVFPRPMTDRPGLDFSFSGLKTFASNTIHNNSDDEQTRADIARAFEDAVVDTLAIKCKRALEQTGFKRLVMAGGVSANRALRIKMEEVMAKLGGEVFYARPEFCTDNGAMIALAGMIRLKGEVNDSLGVIVKARWPLSELPPL.

2 residues coordinate Fe cation: His111 and His115. Residues 134-138, Asp167, Gly180, and Asn272 contribute to the substrate site; that span reads LVSGG. Asp300 serves as a coordination point for Fe cation.

The protein belongs to the KAE1 / TsaD family. Requires Fe(2+) as cofactor.

It localises to the cytoplasm. The enzyme catalyses L-threonylcarbamoyladenylate + adenosine(37) in tRNA = N(6)-L-threonylcarbamoyladenosine(37) in tRNA + AMP + H(+). In terms of biological role, required for the formation of a threonylcarbamoyl group on adenosine at position 37 (t(6)A37) in tRNAs that read codons beginning with adenine. Is involved in the transfer of the threonylcarbamoyl moiety of threonylcarbamoyl-AMP (TC-AMP) to the N6 group of A37, together with TsaE and TsaB. TsaD likely plays a direct catalytic role in this reaction. This chain is tRNA N6-adenosine threonylcarbamoyltransferase, found in Photorhabdus laumondii subsp. laumondii (strain DSM 15139 / CIP 105565 / TT01) (Photorhabdus luminescens subsp. laumondii).